The sequence spans 591 residues: Paxillin (591 aa).

Methionine 1 is subject to N-acetylmethionine. At aspartate 2 the chain carries N-acetylserine. Positions 3–15 (DLDALLADLESTT) match the LD motif 1 motif. Residues 17 to 138 (HISKRPVFLS…PSPTVMSTSL (122 aa)) form a disordered region. Tyrosine 31 is modified (phosphotyrosine; by PTK6). Positions 45 to 54 (VPPPVPPPPS) are enriched in pro residues. Residues 69–106 (WQPSSSRFIHQQPQSSSPVYGSSAKTSSVSNPQDSVGS) show a composition bias toward polar residues. Phosphoserine is present on residues serine 83 and serine 85. Tyrosine 88 is modified (phosphotyrosine). Serine 106 is subject to Phosphoserine. Tyrosine 118 is modified (phosphotyrosine; by PTK6). Residues serine 119, serine 126, and serine 130 each carry the phosphoserine modification. A compositionally biased stretch (polar residues) spans 121–137 (PNKQKSAEPSPTVMSTS). Threonine 132 bears the Phosphothreonine mark. Residues serine 137, serine 140, and serine 143 each carry the phosphoserine modification. Positions 144-156 (ELDRLLLELNAVQ) match the LD motif 2 motif. Residues 159-260 (PPGFPADEAN…TQQQTRISAS (102 aa)) form a disordered region. Phosphotyrosine is present on tyrosine 181. The LD motif 3 motif lies at 216 to 228 (SVESLLDELESSV). Serine 230 is subject to Phosphoserine. Over residues 236-260 (TVNQGEMSSPQRVTSTQQQTRISAS) the composition is skewed to polar residues. A Phosphoserine; by CDK5 modification is found at serine 244. At serine 250 the chain carries Phosphoserine; by SLK. Residues serine 258, serine 261, serine 272, serine 303, serine 322, serine 332, and serine 340 each carry the phosphoserine modification. The interval 262–315 (ATRELDELMASLSDFKIQGLEQRADGERCWAAGWPRDGGRSSPGGQDEGGFMAQ) is required for binding to PARVA and ILK. An LD motif 4 motif is present at residues 265 to 276 (ELDELMASLSDF). A disordered region spans residues 291 to 335 (WAAGWPRDGGRSSPGGQDEGGFMAQGKTGSSSPPGGPPKPGSQLD). The short motif at 333–345 (QLDSMLGSLQSDL) is the LD motif 5 element. LIM zinc-binding domains are found at residues 356–415 (GVCG…LFSP), 416–473 (RCYY…DMFA), 474–533 (PKCG…RRGS), and 534–591 (LCSG…KLFC). Serine 533 is modified (phosphoserine).

It belongs to the paxillin family. In terms of assembly, interacts in vitro with VCL/vinculin as well as to the SH3 domain of SRC and, when tyrosine phosphorylated, to the SH2 domain of CRK. Interacts with GIT1. Interacts with NUDT16L1/SDOS. Interacts with PTK2/FAK1. Interacts with PTK2B/PYK2. Interacts with ASAP2. Interacts with unphosphorylated ITGA4. Interacts with RNF5. Interacts with PDCD10. Interacts with NEK3, the interaction is prolactin-dependent. Interacts with PTK6. Interacts with TGFB1I1. Interacts with SORBS1. Interacts with PARVB. Interacts (via LD motif 4) with PARVA/PARVIN. Interacts (via LD motif 4) with ILK. Interacts (via cytoplasmic domain) with CEACAM1; the interaction is phosphotyrosyl-dependent. Interacts with LIMA1; this complex stabilizes actin dynamics. Interacts with CD36 (via C-terminus). Interacts with TRIM15. Interacts with PAK4; PAK4 acts as a scaffold to suppport PAXI phosphorylation at Ser-272. As to quaternary structure, interacts strongly with PTK2/FAK1 and weakly with VCL/vinculin. Interacts strongly with VCL/vinculin but only weakly with PTK2/FAK1. Phosphorylated by MAPK1/ERK2. Phosphorylated on tyrosine residues during integrin-mediated cell adhesion, embryonic development, fibroblast transformation and following stimulation of cells by mitogens. Phosphorylation at Ser-244 by CDK5 reduces its interaction with PTK2/FAK1 in matrix-cell focal adhesions (MCFA) during oligodendrocytes (OLs) differentiation. Phosphorylation at Tyr-31 and Tyr-118 by PTK6 promote the activation of RAC1 via CRK/CrKII, thereby promoting migration and invasion. Phosphorylation at Ser-250 by SLK is required for PXN redistribution and cell motility. Phosphorylation at Ser-272 promotes focal adhesion disassembly during cell migration.

Its subcellular location is the cytoplasm. It is found in the cytoskeleton. It localises to the cell junction. The protein resides in the focal adhesion. The protein localises to the cell cortex. Its function is as follows. Cytoskeletal protein involved in actin-membrane attachment at sites of cell adhesion to the extracellular matrix (focal adhesion). Recruits other proteins such as TRIM15 to focal adhesion. The polypeptide is Paxillin (Homo sapiens (Human)).